Here is a 127-residue protein sequence, read N- to C-terminus: MKRHEAREKALQVLFQLDNTDLTVEEAMGHIKGQPTNVFYEKIVTGTAEHLEEIDATLEQHLEKWSLARLPKIERTVLRLAVYELLYMPETPKRVVLNEAIELCKTFGDDSSSKFVNGVLSKFTEQE.

Belongs to the NusB family.

Its function is as follows. Involved in transcription antitermination. Required for transcription of ribosomal RNA (rRNA) genes. Binds specifically to the boxA antiterminator sequence of the ribosomal RNA (rrn) operons. The chain is Transcription antitermination protein NusB from Lysinibacillus sphaericus (strain C3-41).